Reading from the N-terminus, the 228-residue chain is Large ribosomal subunit protein bL25 (228 aa).

Polar residues predominate over residues 1 to 10 (MNSLDANTRN). 2 disordered regions span residues 1 to 20 (MNSLDANTRNTKSKGDVRSL) and 187 to 228 (MKEP…EEKK). Basic and acidic residues predominate over residues 202-228 (EDGKEAAPAAEGDKKDDGEKKATEEKK).

The protein belongs to the bacterial ribosomal protein bL25 family. CTC subfamily. As to quaternary structure, part of the 50S ribosomal subunit; part of the 5S rRNA/L5/L18/L25 subcomplex. Contacts the 5S rRNA. Binds to the 5S rRNA independently of L5 and L18.

This is one of the proteins that binds to the 5S RNA in the ribosome where it forms part of the central protuberance. This is Large ribosomal subunit protein bL25 from Pelagibacter ubique (strain HTCC1062).